Here is a 136-residue protein sequence, read N- to C-terminus: Nucleoside diphosphate kinase (136 aa).

Lysine 10, phenylalanine 58, arginine 86, threonine 92, arginine 104, and asparagine 114 together coordinate ATP. Catalysis depends on histidine 117, which acts as the Pros-phosphohistidine intermediate.

This sequence belongs to the NDK family. In terms of assembly, homotetramer. It depends on Mg(2+) as a cofactor.

Its subcellular location is the cytoplasm. It carries out the reaction a 2'-deoxyribonucleoside 5'-diphosphate + ATP = a 2'-deoxyribonucleoside 5'-triphosphate + ADP. The catalysed reaction is a ribonucleoside 5'-diphosphate + ATP = a ribonucleoside 5'-triphosphate + ADP. Functionally, major role in the synthesis of nucleoside triphosphates other than ATP. The ATP gamma phosphate is transferred to the NDP beta phosphate via a ping-pong mechanism, using a phosphorylated active-site intermediate. This chain is Nucleoside diphosphate kinase, found in Mycobacterium avium (strain 104).